A 161-amino-acid chain; its full sequence is Non-specific lipid transfer protein GPI-anchored 24 (161 aa).

The first 23 residues, M1–G23, serve as a signal peptide directing secretion. Disulfide bonds link C42–C79, C49–C63, C64–C104, and C77–C113. An N-linked (GlcNAc...) asparagine glycan is attached at N92. D138 is lipidated: GPI-anchor amidated aspartate. The propeptide at A139–Y161 is removed in mature form.

This sequence belongs to the plant LTP family.

It localises to the cell membrane. In terms of biological role, probable lipid transfer protein. This Arabidopsis thaliana (Mouse-ear cress) protein is Non-specific lipid transfer protein GPI-anchored 24.